Here is a 747-residue protein sequence, read N- to C-terminus: ATPase family gene 2 protein homolog B (747 aa).

M1 carries the post-translational modification N-acetylmethionine. Residues G234 to T241 and G500 to T507 contribute to the ATP site.

It belongs to the AAA ATPase family. AFG2 subfamily. Part of the 55LCC heterohexameric ATPase complex composed at least of AIRIM, AFG2A, AFG2B and CINP. Associates with pre-60S ribosomal particles. In terms of tissue distribution, expressed in neurons; also expressed at lower level in astrocytes, oligodendrocytes and microglia.

The protein localises to the cytoplasm. The protein resides in the cytoskeleton. Its subcellular location is the spindle. It is found in the nucleus. The enzyme catalyses ATP + H2O = ADP + phosphate + H(+). In the context of 55LCC heterohexameric ATPase complex, the ATPase activity is stimulated by DNA binding and inhibited in presence of RNA. In terms of biological role, ATP-dependent chaperone part of the 55LCC heterohexameric ATPase complex which is chromatin-associated and promotes replisome proteostasis to maintain replication fork progression and genome stability. Required for replication fork progression, sister chromatid cohesion, and chromosome stability. The ATPase activity is specifically enhanced by replication fork DNA and is coupled to cysteine protease-dependent cleavage of replisome substrates in response to replication fork damage. Uses ATPase activity to process replisome substrates in S-phase, facilitating their proteolytic turnover from chromatin to ensure DNA replication and mitotic fidelity. Plays an essential role in the cytoplasmic maturation steps of pre-60S ribosomal particles by promoting the release of shuttling protein RSL24D1/RLP24 from the pre-ribosomal particles. The chain is ATPase family gene 2 protein homolog B (Afg2b) from Rattus norvegicus (Rat).